We begin with the raw amino-acid sequence, 166 residues long: Bacterial non-heme ferritin (166 aa).

Positions 2–145 (LSKNLLEALN…THINYLTRIG (144 aa)) constitute a Ferritin-like diiron domain. 5 residues coordinate Fe cation: Glu-17, Glu-50, His-53, Glu-94, and Gln-127.

It belongs to the ferritin family. Prokaryotic subfamily.

The protein resides in the cytoplasm. It catalyses the reaction 4 Fe(2+) + O2 + 6 H2O = 4 iron(III) oxide-hydroxide + 12 H(+). Iron-storage protein. The chain is Bacterial non-heme ferritin (ftnA) from Staphylococcus aureus (strain USA300).